A 423-amino-acid chain; its full sequence is MLDTLLINIGQLLTMDQEDGLLRREAMNTLPVIENGAVGIENGVITFVGTAEEAKGLQAKEVIDCGGKMVSPGLVDPHTHLVFGGSRENEIALKLQGVPYLEILEQGGGILSTVNATKQASKEELVQKAKFHLDRMLSFGVTTVEAKSGYGLDDETEWKQLEATAQLQKEHPIDLVSTFLGAHAVPKEYKGRSKEFLQWMLDLLPEMKEKQLAEFVDIFCETGVFSVEESKEFLLKAKELGFDVKIHADEIDPLGGAEAAAEIGAASADHLVGASDKGIEMLANSNTVATLLPGTTFYLNKESFARGRKMIDEGVAVALATDFNPGSCPTENIQLIMSIAMLKLKMTPEEVWNAVTVNSSYAINRGEVAGKIRVGRKADLVLWDAYNYAYVPYHYGVSHVNTVWKNGNIAYTRGEQSWSTATI.

Fe(3+) is bound by residues His78 and His80. His78 and His80 together coordinate Zn(2+). Arg87, Tyr150, and His183 together coordinate 4-imidazolone-5-propanoate. Residue Tyr150 participates in N-formimidoyl-L-glutamate binding. A Fe(3+)-binding site is contributed by His247. His247 lines the Zn(2+) pocket. 4-imidazolone-5-propanoate is bound at residue Glu250. Position 322 (Asp322) interacts with Fe(3+). A Zn(2+)-binding site is contributed by Asp322. 2 residues coordinate N-formimidoyl-L-glutamate: Asn324 and Gly326. Ser327 contacts 4-imidazolone-5-propanoate.

Belongs to the metallo-dependent hydrolases superfamily. HutI family. Zn(2+) is required as a cofactor. Requires Fe(3+) as cofactor.

Its subcellular location is the cytoplasm. It carries out the reaction 4-imidazolone-5-propanoate + H2O = N-formimidoyl-L-glutamate. The protein operates within amino-acid degradation; L-histidine degradation into L-glutamate; N-formimidoyl-L-glutamate from L-histidine: step 3/3. In terms of biological role, catalyzes the hydrolytic cleavage of the carbon-nitrogen bond in imidazolone-5-propanoate to yield N-formimidoyl-L-glutamate. It is the third step in the universal histidine degradation pathway. The chain is Imidazolonepropionase from Bacillus thuringiensis (strain Al Hakam).